A 92-amino-acid polypeptide reads, in one-letter code: Putative regulatory protein CTN_0877 (92 aa).

The protein belongs to the RemA family.

The chain is Putative regulatory protein CTN_0877 from Thermotoga neapolitana (strain ATCC 49049 / DSM 4359 / NBRC 107923 / NS-E).